The primary structure comprises 101 residues: Small ribosomal subunit protein uS14 (101 aa).

It belongs to the universal ribosomal protein uS14 family. As to quaternary structure, part of the 30S ribosomal subunit. Contacts proteins S3 and S10.

Binds 16S rRNA, required for the assembly of 30S particles and may also be responsible for determining the conformation of the 16S rRNA at the A site. This is Small ribosomal subunit protein uS14 from Psychrobacter arcticus (strain DSM 17307 / VKM B-2377 / 273-4).